Consider the following 417-residue polypeptide: Probable medium-chain specific acyl-CoA dehydrogenase 10, mitochondrial (417 aa).

The N-terminal 15 residues, 1-15 (MLSRIATSSLGLSRS), are a transit peptide targeting the mitochondrion. Residues 148 to 157 (YCVTEPGAGS) and 181 to 183 (WIT) each bind FAD. Residue Ser-157 coordinates substrate. Residue 268 to 271 (DMTR) participates in substrate binding. Residues 306–307 (HQ) and 364–368 (QIFGG) contribute to the FAD site. Glu-391 serves as the catalytic Proton acceptor. Residue Gly-392 coordinates substrate. Residue 393 to 395 (TSQ) coordinates FAD.

Belongs to the acyl-CoA dehydrogenase family. Homotetramer. FAD serves as cofactor. As to expression, expressed in the epidermis and intestine.

The protein resides in the mitochondrion matrix. The enzyme catalyses a medium-chain 2,3-saturated fatty acyl-CoA + oxidized [electron-transfer flavoprotein] + H(+) = a medium-chain (2E)-enoyl-CoA + reduced [electron-transfer flavoprotein]. Its pathway is lipid metabolism; mitochondrial fatty acid beta-oxidation. This enzyme is specific for acyl chain lengths of 4 to 16. The sequence is that of Probable medium-chain specific acyl-CoA dehydrogenase 10, mitochondrial (acdh-10) from Caenorhabditis elegans.